We begin with the raw amino-acid sequence, 690 residues long: DNA ligase (690 aa).

NAD(+) contacts are provided by residues 36 to 40 (DAVYD), 85 to 86 (SL), and Glu124. Lys126 acts as the N6-AMP-lysine intermediate in catalysis. 4 residues coordinate NAD(+): Arg147, Glu184, Lys308, and Lys332. Zn(2+) is bound by residues Cys426, Cys429, Cys444, and Cys449. In terms of domain architecture, BRCT spans 614 to 690 (NQSNVFDGKS…INENELKLLL (77 aa)).

This sequence belongs to the NAD-dependent DNA ligase family. LigA subfamily. Mg(2+) is required as a cofactor. The cofactor is Mn(2+).

The enzyme catalyses NAD(+) + (deoxyribonucleotide)n-3'-hydroxyl + 5'-phospho-(deoxyribonucleotide)m = (deoxyribonucleotide)n+m + AMP + beta-nicotinamide D-nucleotide.. In terms of biological role, DNA ligase that catalyzes the formation of phosphodiester linkages between 5'-phosphoryl and 3'-hydroxyl groups in double-stranded DNA using NAD as a coenzyme and as the energy source for the reaction. It is essential for DNA replication and repair of damaged DNA. In Prochlorococcus marinus (strain NATL1A), this protein is DNA ligase.